Reading from the N-terminus, the 116-residue chain is UPF0342 protein lhv_1666 (116 aa).

This sequence belongs to the UPF0342 family.

This is UPF0342 protein lhv_1666 from Lactobacillus helveticus (strain DPC 4571).